A 317-amino-acid polypeptide reads, in one-letter code: Apolipoprotein E (317 aa).

Residues methionine 1–alanine 18 form the signal peptide. 8 tandem repeats follow at residues alanine 80–threonine 101, proline 102–glycine 123, alanine 124–glycine 145, glutamine 146–leucine 167, arginine 168–glutamate 189, arginine 190–alanine 211, threonine 212–arginine 233, and alanine 234–alanine 255. Positions alanine 80–alanine 255 are 8 X 22 AA approximate tandem repeats. A Methionine sulfoxide modification is found at methionine 143. The residue at position 147 (serine 147) is a Phosphoserine. The interval histidine 158–arginine 168 is LDL and other lipoprotein receptors binding. Residue leucine 162–arginine 165 participates in heparin binding. The lipid-binding and lipoprotein association stretch occupies residues alanine 210–methionine 290. Residue glycine 229–methionine 236 coordinates heparin. Residues glutamine 266 to histidine 317 form a homooligomerization region. A specificity for association with VLDL region spans residues arginine 278–methionine 290.

It belongs to the apolipoprotein A1/A4/E family. In terms of assembly, homotetramer. May interact with ABCA1; functionally associated with ABCA1 in the biogenesis of HDLs. May interact with APP/A4 amyloid-beta peptide; the interaction is extremely stable in vitro but its physiological significance is unclear. May interact with MAPT. May interact with MAP2. In the cerebrospinal fluid, interacts with secreted SORL1. Interacts with PMEL; this allows the loading of PMEL luminal fragment on ILVs to induce fibril nucleation. Post-translationally, APOE exists as multiple glycosylated and sialylated glycoforms within cells and in plasma. The extent of glycosylation and sialylation are tissue and context specific. Glycated in plasma VLDL. In terms of processing, phosphorylated by FAM20C in the extracellular medium.

The protein localises to the secreted. Its subcellular location is the extracellular space. The protein resides in the extracellular matrix. It is found in the extracellular vesicle. It localises to the endosome. The protein localises to the multivesicular body. In terms of biological role, APOE is an apolipoprotein, a protein associating with lipid particles, that mainly functions in lipoprotein-mediated lipid transport between organs via the plasma and interstitial fluids. APOE is a core component of plasma lipoproteins and is involved in their production, conversion and clearance. Apolipoproteins are amphipathic molecules that interact both with lipids of the lipoprotein particle core and the aqueous environment of the plasma. As such, APOE associates with chylomicrons, chylomicron remnants, very low density lipoproteins (VLDL) and intermediate density lipoproteins (IDL) but shows a preferential binding to high-density lipoproteins (HDL). It also binds a wide range of cellular receptors including the LDL receptor/LDLR, the LDL receptor-related proteins LRP1, LRP2 and LRP8 and the very low-density lipoprotein receptor/VLDLR that mediate the cellular uptake of the APOE-containing lipoprotein particles. Finally, APOE also has a heparin-binding activity and binds heparan-sulfate proteoglycans on the surface of cells, a property that supports the capture and the receptor-mediated uptake of APOE-containing lipoproteins by cells. A main function of APOE is to mediate lipoprotein clearance through the uptake of chylomicrons, VLDLs, and HDLs by hepatocytes. APOE is also involved in the biosynthesis by the liver of VLDLs as well as their uptake by peripheral tissues ensuring the delivery of triglycerides and energy storage in muscle, heart and adipose tissues. By participating in the lipoprotein-mediated distribution of lipids among tissues, APOE plays a critical role in plasma and tissues lipid homeostasis. APOE is also involved in two steps of reverse cholesterol transport, the HDLs-mediated transport of cholesterol from peripheral tissues to the liver, and thereby plays an important role in cholesterol homeostasis. First, it is functionally associated with ABCA1 in the biogenesis of HDLs in tissues. Second, it is enriched in circulating HDLs and mediates their uptake by hepatocytes. APOE also plays an important role in lipid transport in the central nervous system, regulating neuron survival and sprouting. The chain is Apolipoprotein E (APOE) from Pan troglodytes (Chimpanzee).